A 494-amino-acid polypeptide reads, in one-letter code: Tripartite motif-containing protein 5 (494 aa).

Ala-2 bears the N-acetylalanine mark. Residues 15–59 form an RING-type zinc finger; that stretch reads CPICLELLTQPLSLDCGHSFCQACLTANHKTSMPDEGERSCPVCR. Phosphoserine is present on Ser-86. A B box-type zinc finger spans residues 91 to 133; sequence QKVDHCARHGEKLLLFCREDRKVICWLCERSQEHRGHHTFLTE. Zn(2+) is bound by residues Cys-96, His-99, Cys-118, and His-124. The stretch at 132 to 241 forms a coiled coil; the sequence is TEEVAQEYQV…LISDLEHRLQ (110 aa). Positions 186–199 are required for interaction with GABARAP and for autophagy; sequence FEQLRHILDWVESN. One can recognise a B30.2/SPRY domain in the interval 282–494; sequence LKVMLKKLRE…VPMTLCSPSS (213 aa).

It belongs to the TRIM/RBCC family. Can form homodimers and homotrimers. In addition to lower-order dimerization, also exhibits a higher-order multimerization and both low- and high-order multimerizations are essential for its restriction activity. Interacts with BTBD1 and BTBD2. Interacts with PSMC4, PSMC5, PSMD7 and HSPA8/HSC70. Interacts (via B30.2/SPRY domain) with HSPA1A/B. Interacts with PSMC2, MAP3K7/TAK1, TAB2 and TAB3. Interacts with SQSTM1. Interacts with TRIM6 and TRIM34. Interacts with ULK1 (phosphorylated form), GABARAP, GABARAPL1, GABARAPL2, MAP1LC3A, MAP1LC3C and BECN1. Degraded in a proteasome-independent fashion in the absence of viral infection but in a proteasome-dependent fashion following exposure to restriction sensitive virus. Post-translationally, autoubiquitinated in a RING finger- and UBE2D2-dependent manner. Monoubiquitinated by TRIM21. Deubiquitinated by Yersinia YopJ. Ubiquitination may not lead to proteasomal degradation.

It localises to the cytoplasm. It is found in the nucleus. The catalysed reaction is S-ubiquitinyl-[E2 ubiquitin-conjugating enzyme]-L-cysteine + [acceptor protein]-L-lysine = [E2 ubiquitin-conjugating enzyme]-L-cysteine + N(6)-ubiquitinyl-[acceptor protein]-L-lysine.. It functions in the pathway protein modification; protein ubiquitination. Capsid-specific restriction factor that prevents infection from non-host-adapted retroviruses. Blocks viral replication early in the life cycle, after viral entry but before reverse transcription. In addition to acting as a capsid-specific restriction factor, also acts as a pattern recognition receptor that activates innate immune signaling in response to the retroviral capsid lattice. Binding to the viral capsid triggers its E3 ubiquitin ligase activity, and in concert with the heterodimeric ubiquitin conjugating enzyme complex UBE2V1-UBE2N (also known as UBC13-UEV1A complex) generates 'Lys-63'-linked polyubiquitin chains, which in turn are catalysts in the autophosphorylation of the MAP3K7/TAK1 complex (includes TAK1, TAB2, and TAB3). Activation of the MAP3K7/TAK1 complex by autophosphorylation results in the induction and expression of NF-kappa-B and MAPK-responsive inflammatory genes, thereby leading to an innate immune response in the infected cell. Plays a role in regulating autophagy through activation of autophagy regulator BECN1 by causing its dissociation from its inhibitors BCL2 and TAB2. In Nomascus leucogenys (Northern white-cheeked gibbon), this protein is Tripartite motif-containing protein 5 (TRIM5).